The sequence spans 145 residues: Large ribosomal subunit protein uL13 (145 aa).

Belongs to the universal ribosomal protein uL13 family. As to quaternary structure, part of the 50S ribosomal subunit.

In terms of biological role, this protein is one of the early assembly proteins of the 50S ribosomal subunit, although it is not seen to bind rRNA by itself. It is important during the early stages of 50S assembly. This chain is Large ribosomal subunit protein uL13, found in Staphylococcus aureus (strain Mu3 / ATCC 700698).